The following is a 118-amino-acid chain: Holo-[acyl-carrier-protein] synthase (118 aa).

2 residues coordinate Mg(2+): Asp9 and Glu52.

The protein belongs to the P-Pant transferase superfamily. AcpS family. The cofactor is Mg(2+).

The protein resides in the cytoplasm. The catalysed reaction is apo-[ACP] + CoA = holo-[ACP] + adenosine 3',5'-bisphosphate + H(+). Functionally, transfers the 4'-phosphopantetheine moiety from coenzyme A to a Ser of acyl-carrier-protein. This Frankia casuarinae (strain DSM 45818 / CECT 9043 / HFP020203 / CcI3) protein is Holo-[acyl-carrier-protein] synthase.